The sequence spans 118 residues: Large ribosomal subunit protein bL19 (118 aa).

It belongs to the bacterial ribosomal protein bL19 family.

Its function is as follows. This protein is located at the 30S-50S ribosomal subunit interface and may play a role in the structure and function of the aminoacyl-tRNA binding site. The protein is Large ribosomal subunit protein bL19 of Geobacter metallireducens (strain ATCC 53774 / DSM 7210 / GS-15).